The primary structure comprises 516 residues: Facilitated glucose transporter homolog (516 aa).

The interval 1–37 is disordered; the sequence is MNAVVASQNKNDRSFSNMESESSSNVEKSEKENHHQS. The Cytoplasmic portion of the chain corresponds to 1 to 47; the sequence is MNAVVASQNKNDRSFSNMESESSSNVEKSEKENHHQSLPDENWTPFL. Positions 14–26 are enriched in low complexity; sequence SFSNMESESSSNV. Residues 27-37 are compositionally biased toward basic and acidic residues; that stretch reads EKSEKENHHQS. A helical membrane pass occupies residues 48 to 68; sequence FFCISSIALASFQDGFQIGCI. The Extracellular portion of the chain corresponds to 69–101; sequence NAPGPLIIDWIKKCHFELFGEVLSQYQADFIWS. Residues 102–122 form a helical membrane-spanning segment; it reads VAVSMFSVGGMFGSFCSGFLA. Residues 123-138 lie on the Cytoplasmic side of the membrane; it reads DKFGRKSTLLYNNILA. Residues 139–159 traverse the membrane as a helical segment; it reads LLAAVCLSTSKLFNFYPMIVF. Topologically, residues 160 to 161 are extracellular; sequence GR. A helical membrane pass occupies residues 162 to 182; sequence FLVGLNCGITSGLVPMFLTEL. Residues 183 to 200 are Cytoplasmic-facing; sequence APANLRGKCGSFHQLNIS. A helical transmembrane segment spans residues 201–221; the sequence is VAIVLSQALGLPQIFGTQVGW. A topological domain (extracellular) is located at residue Pro-222. Residues 223–243 form a helical membrane-spanning segment; sequence YIFACVAIPTFLQLATIPFCV. The Cytoplasmic portion of the chain corresponds to 244 to 306; the sequence is ESPKYLISKL…SLFKGDNQWP (63 aa). Residues 307–327 form a helical membrane-spanning segment; the sequence is MIVSILMMFSQQFSGISAVTF. Residues 328–344 lie on the Extracellular side of the membrane; the sequence is YSTLIFKRNGLSGNEPM. The chain crosses the membrane as a helical span at residues 345–365; sequence YATVGFGCIKLIATFGCLFLI. At 366–376 the chain is on the cytoplasmic side; it reads DHPKFGRKRLH. The helical transmembrane segment at 377 to 397 threads the bilayer; sequence IAGLSGMCISSILIVITLTLS. The Extracellular portion of the chain corresponds to 398–409; that stretch reads NAGYHWASYMNV. The helical transmembrane segment at 410-430 threads the bilayer; it reads LFILSFVVTFAFGPGPIPWFF. The Cytoplasmic segment spans residues 431–444; that stretch reads TSELFDSATRGRAA. Residues 445–465 traverse the membrane as a helical segment; the sequence is AVSATSNWVANWMVGLTFLPI. Residues 466 to 471 are Extracellular-facing; the sequence is NNIIHQ. Residues 472 to 492 form a helical membrane-spanning segment; the sequence is YAFLMFTFFTFTFAIFTWKFV. The Cytoplasmic portion of the chain corresponds to 493-516; the sequence is PETKGKSPSAIRKELAFMRKRICS.

This sequence belongs to the major facilitator superfamily. Sugar transporter (TC 2.A.1.1) family. Expressed in seam cells from the early embryonic stage through the L2 stage (at protein level).

It localises to the cell membrane. Its function is as follows. Appears to have no transport activity for glucose. This chain is Facilitated glucose transporter homolog, found in Caenorhabditis elegans.